Reading from the N-terminus, the 504-residue chain is Topoisomerase I damage affected protein 11 (504 aa).

Residues 32 to 62 (RKTGRKIRSASSNGYRLEHHRTSSAGSMHSQ) are disordered. Residues 179 to 231 (ALLQSLATKELELLECKQKIEDLKKQTQHEEQNYTRRARELHELKEQVSKHLD) are a coiled coil. T236 carries the phosphothreonine modification. Phosphoserine is present on residues S244 and S286. 3 disordered regions span residues 252–306 (LESR…SKQS), 332–377 (WDDS…SVSR), and 400–504 (DVIT…MTDF). Positions 257–287 (ENAGNSSLPSSVSKPKNMGHQSTNQSRSVSP) are enriched in polar residues. Residues 290 to 301 (IQERRQRDDSSD) are compositionally biased toward basic and acidic residues. 2 stretches are compositionally biased toward polar residues: residues 332 to 359 (WDDS…QQYD) and 368 to 377 (KSPSQGSVSR). The segment covering 403–421 (TDNRCDPVYKSDRQHEQKK) has biased composition (basic and acidic residues). Positions 470–479 (TREKKSKRSS) are enriched in basic residues. The span at 491–504 (DNSSVKNSVEMTDF) shows a compositional bias: polar residues.

It belongs to the TDA11 family.

It localises to the cytoplasm. The sequence is that of Topoisomerase I damage affected protein 11 (TDA11) from Saccharomyces cerevisiae (strain ATCC 204508 / S288c) (Baker's yeast).